The primary structure comprises 316 residues: 1-aminocyclopropane-1-carboxylate oxidase 4 (316 aa).

A Fe2OG dioxygenase domain is found at 153 to 253 (PNFGTKVSNY…RMSLASFYNP (101 aa)). Residues His-177, Asp-179, and His-234 each contribute to the Fe cation site.

This sequence belongs to the iron/ascorbate-dependent oxidoreductase family. Requires Fe cation as cofactor. In terms of tissue distribution, expressed in all of the floral organs examined apart from the sepals.

The enzyme catalyses 1-aminocyclopropane-1-carboxylate + L-ascorbate + O2 = ethene + L-dehydroascorbate + hydrogen cyanide + CO2 + 2 H2O. It participates in alkene biosynthesis; ethylene biosynthesis via S-adenosyl-L-methionine; ethylene from S-adenosyl-L-methionine: step 2/2. The chain is 1-aminocyclopropane-1-carboxylate oxidase 4 (ACO4) from Solanum lycopersicum (Tomato).